Consider the following 392-residue polypeptide: DNA replication protein (392 aa).

The segment at 322 to 341 (NGGNKKISEGTSRAQRKAPH) is disordered.

May play a role in viral DNA replication. Found associated with a viral DNA origin of replication and with host membranes, may attach this origin to the bacterial envelope to initiate replication. The polypeptide is DNA replication protein (69) (Enterobacteria phage T4 (Bacteriophage T4)).